The primary structure comprises 430 residues: Serine hydroxymethyltransferase 1 (430 aa).

(6S)-5,6,7,8-tetrahydrofolate contacts are provided by residues L132 and 136-138 (GHL). K241 bears the N6-(pyridoxal phosphate)lysine mark.

The protein belongs to the SHMT family. In terms of assembly, homodimer. Pyridoxal 5'-phosphate is required as a cofactor.

The protein resides in the cytoplasm. It catalyses the reaction (6R)-5,10-methylene-5,6,7,8-tetrahydrofolate + glycine + H2O = (6S)-5,6,7,8-tetrahydrofolate + L-serine. Its pathway is one-carbon metabolism; tetrahydrofolate interconversion. It participates in amino-acid biosynthesis; glycine biosynthesis; glycine from L-serine: step 1/1. Catalyzes the reversible interconversion of serine and glycine with tetrahydrofolate (THF) serving as the one-carbon carrier. This reaction serves as the major source of one-carbon groups required for the biosynthesis of purines, thymidylate, methionine, and other important biomolecules. Also exhibits THF-independent aldolase activity toward beta-hydroxyamino acids, producing glycine and aldehydes, via a retro-aldol mechanism. This is Serine hydroxymethyltransferase 1 from Bordetella parapertussis (strain 12822 / ATCC BAA-587 / NCTC 13253).